Reading from the N-terminus, the 87-residue chain is MAFKKKFAPRRKFCRFCADKELPIDYKRADILRDFITERGKIIARRITGTCAHHQRVLTREIKRARQMALLIYTATHSSDVKKKSIL.

Belongs to the bacterial ribosomal protein bS18 family. As to quaternary structure, part of the 30S ribosomal subunit. Forms a tight heterodimer with protein bS6.

In terms of biological role, binds as a heterodimer with protein bS6 to the central domain of the 16S rRNA, where it helps stabilize the platform of the 30S subunit. This Nitratidesulfovibrio vulgaris (strain ATCC 29579 / DSM 644 / CCUG 34227 / NCIMB 8303 / VKM B-1760 / Hildenborough) (Desulfovibrio vulgaris) protein is Small ribosomal subunit protein bS18.